Reading from the N-terminus, the 575-residue chain is Flagellin B (575 aa).

This sequence belongs to the bacterial flagellin family. In terms of assembly, heteromer of flaA and flaB.

The protein resides in the secreted. The protein localises to the bacterial flagellum. Functionally, flagellin is the subunit protein which polymerizes to form the filaments of bacterial flagella. This chain is Flagellin B (flaB), found in Campylobacter jejuni.